Consider the following 209-residue polypeptide: Probable GTP-binding protein EngB (209 aa).

In terms of domain architecture, EngB-type G spans 23–198; it reads NGAEIAFAGR…EKVVAGWLVP (176 aa). GTP is bound by residues 31–38, 58–62, 76–79, 143–146, and 177–179; these read GRSNAGKS, GRTQL, DLPG, TKSD, and FSS. The Mg(2+) site is built by serine 38 and threonine 60.

This sequence belongs to the TRAFAC class TrmE-Era-EngA-EngB-Septin-like GTPase superfamily. EngB GTPase family. Mg(2+) serves as cofactor.

Necessary for normal cell division and for the maintenance of normal septation. The sequence is that of Probable GTP-binding protein EngB from Azoarcus sp. (strain BH72).